The primary structure comprises 508 residues: ATP synthase subunit alpha, chloroplastic (508 aa).

ATP is bound at residue 170-177 (GDRQTGKT).

Belongs to the ATPase alpha/beta chains family. As to quaternary structure, F-type ATPases have 2 components, CF(1) - the catalytic core - and CF(0) - the membrane proton channel. CF(1) has five subunits: alpha(3), beta(3), gamma(1), delta(1), epsilon(1). CF(0) has four main subunits: a, b, b' and c.

It is found in the plastid. Its subcellular location is the chloroplast thylakoid membrane. The enzyme catalyses ATP + H2O + 4 H(+)(in) = ADP + phosphate + 5 H(+)(out). Functionally, produces ATP from ADP in the presence of a proton gradient across the membrane. The alpha chain is a regulatory subunit. This is ATP synthase subunit alpha, chloroplastic from Helianthus annuus (Common sunflower).